Reading from the N-terminus, the 526-residue chain is MSYPQEVDKRRTFAIISHPDAGKTTITEKVLLYGNAIQTAGSVKGKGSQAHAKSDWMEMEKQRGISITTSVMQFPYNDCLVNLLDTPGHEDFSEDTYRTLTAVDSCLMVIDAAKGVEDRTIKLMEVTRLRDTPILTFMNKLDRDIRDPMELLDEVESVLKIHCAPITWPIGCGKLFKGVYHLYKDETYLYQSGQGSTIQEVRIIKGLDNPQLDAAVGADLAQQLREELELVQGASNEFDQELFIGGELTPVFFGTALGNFGVNHFLDGLTQWAPKPQARKADTRIVESAEEKFTGFVFKIQANMDPKHRDRVAFMRVVSGKYEKGMKLKHVRIGKDVVISDALTFMAGDRTHAEQAYAGDIIGLHNHGTIQIGDTFTQGEDLKFTGIPNFAPELFRRIRLRDPLKQKQLLKGLVQLSEEGAVQVFRPLANNDLIVGAVGVLQFDVVVARLKTEYNVEAVYENVNVATARWVECADEKKFEEFKRKNEQNLALDGGDNLTYIAPTMVNLNLSQERYPDVTFFKTREH.

A tr-type G domain is found at 8–277 (DKRRTFAIIS…GLTQWAPKPQ (270 aa)). GTP is bound by residues 17–24 (SHPDAGKT), 85–89 (DTPGH), and 139–142 (NKLD).

This sequence belongs to the TRAFAC class translation factor GTPase superfamily. Classic translation factor GTPase family. PrfC subfamily.

The protein resides in the cytoplasm. Its function is as follows. Increases the formation of ribosomal termination complexes and stimulates activities of RF-1 and RF-2. It binds guanine nucleotides and has strong preference for UGA stop codons. It may interact directly with the ribosome. The stimulation of RF-1 and RF-2 is significantly reduced by GTP and GDP, but not by GMP. The chain is Peptide chain release factor 3 from Actinobacillus succinogenes (strain ATCC 55618 / DSM 22257 / CCUG 43843 / 130Z).